We begin with the raw amino-acid sequence, 282 residues long: Bifunctional protein FolD 2 (282 aa).

Residues 164–166 (GRS) and serine 189 contribute to the NADP(+) site.

The protein belongs to the tetrahydrofolate dehydrogenase/cyclohydrolase family. In terms of assembly, homodimer.

It catalyses the reaction (6R)-5,10-methylene-5,6,7,8-tetrahydrofolate + NADP(+) = (6R)-5,10-methenyltetrahydrofolate + NADPH. It carries out the reaction (6R)-5,10-methenyltetrahydrofolate + H2O = (6R)-10-formyltetrahydrofolate + H(+). It functions in the pathway one-carbon metabolism; tetrahydrofolate interconversion. Functionally, catalyzes the oxidation of 5,10-methylenetetrahydrofolate to 5,10-methenyltetrahydrofolate and then the hydrolysis of 5,10-methenyltetrahydrofolate to 10-formyltetrahydrofolate. The protein is Bifunctional protein FolD 2 of Lactobacillus johnsonii (strain CNCM I-12250 / La1 / NCC 533).